The primary structure comprises 588 residues: Aspartate--tRNA ligase (588 aa).

Glutamate 177 serves as a coordination point for L-aspartate. The aspartate stretch occupies residues 201 to 204 (QIFK). Residue arginine 223 participates in L-aspartate binding. Residues 223–225 (RDE) and glutamine 232 contribute to the ATP site. Histidine 451 contributes to the L-aspartate binding site. Residue glutamate 485 coordinates ATP. L-aspartate is bound at residue arginine 492. 537 to 540 (GLDR) contributes to the ATP binding site.

It belongs to the class-II aminoacyl-tRNA synthetase family. Type 1 subfamily. In terms of assembly, homodimer.

Its subcellular location is the cytoplasm. It catalyses the reaction tRNA(Asp) + L-aspartate + ATP = L-aspartyl-tRNA(Asp) + AMP + diphosphate. In terms of biological role, catalyzes the attachment of L-aspartate to tRNA(Asp) in a two-step reaction: L-aspartate is first activated by ATP to form Asp-AMP and then transferred to the acceptor end of tRNA(Asp). The sequence is that of Aspartate--tRNA ligase from Staphylococcus saprophyticus subsp. saprophyticus (strain ATCC 15305 / DSM 20229 / NCIMB 8711 / NCTC 7292 / S-41).